Reading from the N-terminus, the 435-residue chain is Mitochondrial distribution and morphology protein 12 (435 aa).

The SMP-LTD domain occupies 1–435; the sequence is MSIEVDWGAA…VYPSFWTFLV (435 aa). Disordered regions lie at residues 73–113 and 186–268; these read DEDD…AINH and WNDS…TSEE. Basic and acidic residues predominate over residues 96-113; the sequence is THPELNESSFRDDNAINH. A compositionally biased stretch (low complexity) spans 218–238; sequence SSNPTSRPSTSSTLPSHPSGS. Over residues 251 to 268 the composition is skewed to basic and acidic residues; it reads HGSHPEEHGHLDDPTSEE.

This sequence belongs to the MDM12 family. In terms of assembly, component of the ER-mitochondria encounter structure (ERMES) or MDM complex, composed of mmm1, mdm10, mdm12 and mdm34. A mmm1 homodimer associates with one molecule of mdm12 on each side in a pairwise head-to-tail manner, and the SMP-LTD domains of mmm1 and mdm12 generate a continuous hydrophobic tunnel for phospholipid trafficking.

Its subcellular location is the mitochondrion outer membrane. The protein localises to the endoplasmic reticulum membrane. Its function is as follows. Component of the ERMES/MDM complex, which serves as a molecular tether to connect the endoplasmic reticulum (ER) and mitochondria. Components of this complex are involved in the control of mitochondrial shape and protein biogenesis, and function in nonvesicular lipid trafficking between the ER and mitochondria. Mdm12 is required for the interaction of the ER-resident membrane protein mmm1 and the outer mitochondrial membrane-resident beta-barrel protein mdm10. The mdm12-mmm1 subcomplex functions in the major beta-barrel assembly pathway that is responsible for biogenesis of all mitochondrial outer membrane beta-barrel proteins, and acts in a late step after the SAM complex. The mdm10-mdm12-mmm1 subcomplex further acts in the TOM40-specific pathway after the action of the mdm12-mmm1 complex. Essential for establishing and maintaining the structure of mitochondria and maintenance of mtDNA nucleoids. This is Mitochondrial distribution and morphology protein 12 from Aspergillus niger (strain ATCC MYA-4892 / CBS 513.88 / FGSC A1513).